The primary structure comprises 474 residues: Bifunctional protein HldE (474 aa).

The segment at Met-1–Ser-317 is ribokinase. Asn-194–Glu-197 lines the ATP pocket. Asp-263 is an active-site residue. The tract at residues Phe-343–Glu-474 is cytidylyltransferase.

The protein in the N-terminal section; belongs to the carbohydrate kinase PfkB family. This sequence in the C-terminal section; belongs to the cytidylyltransferase family. Homodimer.

It catalyses the reaction D-glycero-beta-D-manno-heptose 7-phosphate + ATP = D-glycero-beta-D-manno-heptose 1,7-bisphosphate + ADP + H(+). The catalysed reaction is D-glycero-beta-D-manno-heptose 1-phosphate + ATP + H(+) = ADP-D-glycero-beta-D-manno-heptose + diphosphate. The protein operates within nucleotide-sugar biosynthesis; ADP-L-glycero-beta-D-manno-heptose biosynthesis; ADP-L-glycero-beta-D-manno-heptose from D-glycero-beta-D-manno-heptose 7-phosphate: step 1/4. Its pathway is nucleotide-sugar biosynthesis; ADP-L-glycero-beta-D-manno-heptose biosynthesis; ADP-L-glycero-beta-D-manno-heptose from D-glycero-beta-D-manno-heptose 7-phosphate: step 3/4. In terms of biological role, catalyzes the phosphorylation of D-glycero-D-manno-heptose 7-phosphate at the C-1 position to selectively form D-glycero-beta-D-manno-heptose-1,7-bisphosphate. Functionally, catalyzes the ADP transfer from ATP to D-glycero-beta-D-manno-heptose 1-phosphate, yielding ADP-D-glycero-beta-D-manno-heptose. The chain is Bifunctional protein HldE from Pseudomonas fluorescens (strain SBW25).